The primary structure comprises 430 residues: Serine--tRNA ligase (430 aa).

237 to 239 is a binding site for L-serine; the sequence is TAE. An ATP-binding site is contributed by 268–270; the sequence is RRE. An L-serine-binding site is contributed by Glu291. 355–358 lines the ATP pocket; the sequence is EISS. An L-serine-binding site is contributed by Ser391.

This sequence belongs to the class-II aminoacyl-tRNA synthetase family. Type-1 seryl-tRNA synthetase subfamily. Homodimer. The tRNA molecule binds across the dimer.

The protein localises to the cytoplasm. The catalysed reaction is tRNA(Ser) + L-serine + ATP = L-seryl-tRNA(Ser) + AMP + diphosphate + H(+). It catalyses the reaction tRNA(Sec) + L-serine + ATP = L-seryl-tRNA(Sec) + AMP + diphosphate + H(+). The protein operates within aminoacyl-tRNA biosynthesis; selenocysteinyl-tRNA(Sec) biosynthesis; L-seryl-tRNA(Sec) from L-serine and tRNA(Sec): step 1/1. Functionally, catalyzes the attachment of serine to tRNA(Ser). Is also able to aminoacylate tRNA(Sec) with serine, to form the misacylated tRNA L-seryl-tRNA(Sec), which will be further converted into selenocysteinyl-tRNA(Sec). The polypeptide is Serine--tRNA ligase (Magnetococcus marinus (strain ATCC BAA-1437 / JCM 17883 / MC-1)).